The chain runs to 181 residues: MLSVGFNIAINATTQGVPKIIESLFPNLPNFIAHLLATIVLVIVLAKLVYKPYKQMIEKQRQKITEVLSDAIEKQTQANIKIKQANSLLEEAKTESVSIINTARVDAEIQKNKIIDNANLQAKNIQSYAQNSIKQEKIKAQLEIKNTIVNLAINSAEKILSKEIDKNTNKKLIEEFIKDLD.

The helical transmembrane segment at 24–44 (LFPNLPNFIAHLLATIVLVIV) threads the bilayer.

The protein belongs to the ATPase B chain family. In terms of assembly, F-type ATPases have 2 components, F(1) - the catalytic core - and F(0) - the membrane proton channel. F(1) has five subunits: alpha(3), beta(3), gamma(1), delta(1), epsilon(1). F(0) has three main subunits: a(1), b(2) and c(10-14). The alpha and beta chains form an alternating ring which encloses part of the gamma chain. F(1) is attached to F(0) by a central stalk formed by the gamma and epsilon chains, while a peripheral stalk is formed by the delta and b chains.

The protein resides in the cell membrane. Its function is as follows. F(1)F(0) ATP synthase produces ATP from ADP in the presence of a proton or sodium gradient. F-type ATPases consist of two structural domains, F(1) containing the extramembraneous catalytic core and F(0) containing the membrane proton channel, linked together by a central stalk and a peripheral stalk. During catalysis, ATP synthesis in the catalytic domain of F(1) is coupled via a rotary mechanism of the central stalk subunits to proton translocation. Functionally, component of the F(0) channel, it forms part of the peripheral stalk, linking F(1) to F(0). The protein is ATP synthase subunit b of Mycoplasma capricolum subsp. capricolum (strain California kid / ATCC 27343 / NCTC 10154).